We begin with the raw amino-acid sequence, 216 residues long: MOB kinase activator-like 1 homolog B (216 aa).

Residues C79, C84, H161, and H166 each coordinate Zn(2+).

The protein belongs to the MOB1/phocein family.

This is MOB kinase activator-like 1 homolog B (mobB) from Dictyostelium discoideum (Social amoeba).